Here is a 74-residue protein sequence, read N- to C-terminus: Anaphase-promoting complex subunit 13 (74 aa).

Residues 33–53 (LNELPEPEQDNGGTTESVKEQ) form a disordered region.

This sequence belongs to the APC13 family. As to quaternary structure, the mammalian APC/C is composed at least of 14 distinct subunits ANAPC1, ANAPC2, CDC27/APC3, ANAPC4, ANAPC5, CDC16/APC6, ANAPC7, CDC23/APC8, ANAPC10, ANAPC11, CDC26/APC12, ANAPC13, ANAPC15 and ANAPC16 that assemble into a complex of at least 19 chains with a combined molecular mass of around 1.2 MDa; APC/C interacts with FZR1 and FBXO5.

It localises to the nucleus. It functions in the pathway protein modification; protein ubiquitination. In terms of biological role, component of the anaphase promoting complex/cyclosome (APC/C), a cell cycle-regulated E3 ubiquitin ligase that controls progression through mitosis and the G1 phase of the cell cycle. The APC/C complex acts by mediating ubiquitination and subsequent degradation of target proteins: it mainly mediates the formation of 'Lys-11'-linked polyubiquitin chains and, to a lower extent, the formation of 'Lys-48'- and 'Lys-63'-linked polyubiquitin chains. The APC/C complex catalyzes assembly of branched 'Lys-11'-/'Lys-48'-linked branched ubiquitin chains on target proteins. This chain is Anaphase-promoting complex subunit 13 (ANAPC13), found in Bos taurus (Bovine).